We begin with the raw amino-acid sequence, 108 residues long: PTS system fructose-like EIIB component 1 (108 aa).

Positions 1–104 constitute a PTS EIIB type-2 domain; the sequence is MSKKLIALCA…IIKEIEEMIA (104 aa). Cys11 (phosphocysteine intermediate) is an active-site residue. Cys11 bears the Phosphocysteine; by EIIA mark.

The protein resides in the cytoplasm. The enzyme catalyses D-fructose(out) + N(pros)-phospho-L-histidyl-[protein] = D-fructose 1-phosphate(in) + L-histidyl-[protein]. Functionally, the phosphoenolpyruvate-dependent sugar phosphotransferase system (sugar PTS), a major carbohydrate active transport system, catalyzes the phosphorylation of incoming sugar substrates concomitantly with their translocation across the cell membrane. The enzyme II FryABC PTS system is involved in fructose transport. The sequence is that of PTS system fructose-like EIIB component 1 (fryB) from Escherichia coli O157:H7.